Here is a 324-residue protein sequence, read N- to C-terminus: Beta-ketoacyl-[acyl-carrier-protein] synthase III (324 aa).

Active-site residues include cysteine 114 and histidine 246. Residues glutamine 247–arginine 251 form an ACP-binding region. Residue asparagine 276 is part of the active site.

The protein belongs to the thiolase-like superfamily. FabH family. Homodimer.

The protein localises to the cytoplasm. It catalyses the reaction malonyl-[ACP] + acetyl-CoA + H(+) = 3-oxobutanoyl-[ACP] + CO2 + CoA. It functions in the pathway lipid metabolism; fatty acid biosynthesis. In terms of biological role, catalyzes the condensation reaction of fatty acid synthesis by the addition to an acyl acceptor of two carbons from malonyl-ACP. Catalyzes the first condensation reaction which initiates fatty acid synthesis and may therefore play a role in governing the total rate of fatty acid production. Possesses both acetoacetyl-ACP synthase and acetyl transacylase activities. Its substrate specificity determines the biosynthesis of branched-chain and/or straight-chain of fatty acids. In Campylobacter jejuni subsp. jejuni serotype O:2 (strain ATCC 700819 / NCTC 11168), this protein is Beta-ketoacyl-[acyl-carrier-protein] synthase III.